Reading from the N-terminus, the 424-residue chain is UPF0229 protein Avin_46880 (424 aa).

A disordered region spans residues Arg-57–Gly-108. Residues Ser-92–Ser-101 show a composition bias toward gly residues.

It belongs to the UPF0229 family.

In Azotobacter vinelandii (strain DJ / ATCC BAA-1303), this protein is UPF0229 protein Avin_46880.